We begin with the raw amino-acid sequence, 111 residues long: ATP-dependent Clp protease adapter protein ClpS (111 aa).

Belongs to the ClpS family. In terms of assembly, binds to the N-terminal domain of the chaperone ClpA.

In terms of biological role, involved in the modulation of the specificity of the ClpAP-mediated ATP-dependent protein degradation. This chain is ATP-dependent Clp protease adapter protein ClpS, found in Leptospira interrogans serogroup Icterohaemorrhagiae serovar copenhageni (strain Fiocruz L1-130).